The chain runs to 311 residues: Homoserine kinase (311 aa).

Position 88–98 (88–98 (PEGLGLGSSGA)) interacts with ATP.

This sequence belongs to the GHMP kinase family. Homoserine kinase subfamily.

Its subcellular location is the cytoplasm. It catalyses the reaction L-homoserine + ATP = O-phospho-L-homoserine + ADP + H(+). It functions in the pathway amino-acid biosynthesis; L-threonine biosynthesis; L-threonine from L-aspartate: step 4/5. Functionally, catalyzes the ATP-dependent phosphorylation of L-homoserine to L-homoserine phosphate. The polypeptide is Homoserine kinase (Saccharolobus islandicus (strain L.S.2.15 / Lassen #1) (Sulfolobus islandicus)).